The following is a 188-amino-acid chain: Dual specificity protein phosphatase 18 (188 aa).

Positions G19 to G160 constitute a Tyrosine-protein phosphatase domain. Residues M95–I141 are sufficient for mitochondrial localization. C104 acts as the Phosphocysteine intermediate in catalysis.

This sequence belongs to the protein-tyrosine phosphatase family. Non-receptor class dual specificity subfamily.

It is found in the cytoplasm. It localises to the nucleus. The protein resides in the mitochondrion inner membrane. It carries out the reaction O-phospho-L-tyrosyl-[protein] + H2O = L-tyrosyl-[protein] + phosphate. It catalyses the reaction O-phospho-L-seryl-[protein] + H2O = L-seryl-[protein] + phosphate. The enzyme catalyses O-phospho-L-threonyl-[protein] + H2O = L-threonyl-[protein] + phosphate. In terms of biological role, can dephosphorylate single and diphosphorylated synthetic MAPK peptides, with preference for the phosphotyrosine and diphosphorylated forms over phosphothreonine. In vitro, dephosphorylates p-nitrophenyl phosphate (pNPP). The protein is Dual specificity protein phosphatase 18 (DUSP18) of Pongo abelii (Sumatran orangutan).